The chain runs to 325 residues: Elongation factor P--(R)-beta-lysine ligase (325 aa).

76–78 (SPE) serves as a coordination point for substrate. ATP is bound by residues 100-102 (RNE) and asparagine 109. Residue tyrosine 118 participates in substrate binding. 244–245 (EL) is a binding site for ATP. Position 251 (glutamate 251) interacts with substrate. Glycine 300 serves as a coordination point for ATP.

It belongs to the class-II aminoacyl-tRNA synthetase family. EpmA subfamily. As to quaternary structure, homodimer.

It carries out the reaction D-beta-lysine + L-lysyl-[protein] + ATP = N(6)-((3R)-3,6-diaminohexanoyl)-L-lysyl-[protein] + AMP + diphosphate + H(+). In terms of biological role, with EpmB is involved in the beta-lysylation step of the post-translational modification of translation elongation factor P (EF-P). Catalyzes the ATP-dependent activation of (R)-beta-lysine produced by EpmB, forming a lysyl-adenylate, from which the beta-lysyl moiety is then transferred to the epsilon-amino group of a conserved specific lysine residue in EF-P. The sequence is that of Elongation factor P--(R)-beta-lysine ligase from Erwinia tasmaniensis (strain DSM 17950 / CFBP 7177 / CIP 109463 / NCPPB 4357 / Et1/99).